The following is a 581-amino-acid chain: A-type ATP synthase subunit A (581 aa).

Residue 234–241 (GPFGSGKT) participates in ATP binding.

The protein belongs to the ATPase alpha/beta chains family. Has multiple subunits with at least A(3), B(3), C, D, E, F, H, I and proteolipid K(x).

Its subcellular location is the cell membrane. It catalyses the reaction ATP + H2O + 4 H(+)(in) = ADP + phosphate + 5 H(+)(out). Its function is as follows. Component of the A-type ATP synthase that produces ATP from ADP in the presence of a proton gradient across the membrane. The A chain is the catalytic subunit. The sequence is that of A-type ATP synthase subunit A from Archaeoglobus fulgidus (strain ATCC 49558 / DSM 4304 / JCM 9628 / NBRC 100126 / VC-16).